The primary structure comprises 708 residues: Polyribonucleotide nucleotidyltransferase (708 aa).

2 residues coordinate Mg(2+): Asp-486 and Asp-492. One can recognise a KH domain in the interval 553 to 612 (PRIIKFKINPEKIRDVIGKGGAVIRALTEETGTTIDISDDGSVTIACVSSEGGEQARKRI). The 69-residue stretch at 622 to 690 (GRIYEGTVLK…EKGRLRLSMK (69 aa)) folds into the S1 motif domain.

It belongs to the polyribonucleotide nucleotidyltransferase family. Mg(2+) serves as cofactor.

It is found in the cytoplasm. The catalysed reaction is RNA(n+1) + phosphate = RNA(n) + a ribonucleoside 5'-diphosphate. In terms of biological role, involved in mRNA degradation. Catalyzes the phosphorolysis of single-stranded polyribonucleotides processively in the 3'- to 5'-direction. This Nitrosomonas europaea (strain ATCC 19718 / CIP 103999 / KCTC 2705 / NBRC 14298) protein is Polyribonucleotide nucleotidyltransferase.